The sequence spans 157 residues: Cell cycle regulator of non-homologous end joining (157 aa).

Residue Met-1 is modified to N-acetylmethionine. Positions 1–21 (METLQSETKTRVLPSWLTAQV) match the KBM motif. The interval 77-147 (KACEQPALAG…SPEEEEEEDV (71 aa)) is disordered. Residues 98-107 (VSPHTSSGSS) are compositionally biased toward low complexity. Residues 123–136 (SPSQRPGGSSSACS) show a composition bias toward polar residues. Positions 147 to 157 (VLKYVREIFFS) match the XLM motif.

As to quaternary structure, interacts (via KBM motif) with XRCC5/Ku80 and XRCC6/Ku70 heterodimer. Interacts (via XLF motif) with TRIM28/KAP1, ATM, MRE11, NBN and RAD50. Interacts with splicing factor SF3B1. Interacts with ERCC6L2; this interaction is DNA independent. In terms of assembly, does not interact with XRCC5/Ku80 and XRCC6/Ku70 heterodimer. Interacts (via KBM motif) with XRCC5/Ku80 and XRCC6/Ku70 heterodimer.

It localises to the cytoplasm. It is found in the nucleus. The protein localises to the chromosome. In terms of biological role, cell-cycle-specific regulator of classical non-homologous end joining (NHEJ) of DNA double-strand break (DSB) repair, which can act both as an activator or inhibitor of NHEJ, depending on the cell cycle phase. Acts as a regulator of DNA repair pathway choice by specifically inhibiting classical NHEJ during the S and G2 phases, thereby promoting error-free repair by homologous recombination during cell cycle phases when sister chromatids are present. Preferentially protects single-stranded overhangs at break sites by inhibiting classical NHEJ, thereby creating a local environment that favors homologous recombination. Acts via interaction with XRCC5/Ku80 and XRCC6/Ku70. In contrast, acts as an activator of NHEJ during G1 phase of the cell cycle: promotes classical NHEJ in G1 phase cells via multivalent interactions that increase the affinity of DNA damage response proteins for DSB-associated chromatin. Also involved in immunoglobulin V(D)J recombination. May also act as an indirect regulator of proteasome. The chain is Cell cycle regulator of non-homologous end joining from Homo sapiens (Human).